A 474-amino-acid chain; its full sequence is 3-isopropylmalate dehydratase large subunit (474 aa).

Positions 355, 415, and 418 each coordinate [4Fe-4S] cluster.

This sequence belongs to the aconitase/IPM isomerase family. LeuC type 1 subfamily. As to quaternary structure, heterodimer of LeuC and LeuD. It depends on [4Fe-4S] cluster as a cofactor.

The enzyme catalyses (2R,3S)-3-isopropylmalate = (2S)-2-isopropylmalate. Its pathway is amino-acid biosynthesis; L-leucine biosynthesis; L-leucine from 3-methyl-2-oxobutanoate: step 2/4. In terms of biological role, catalyzes the isomerization between 2-isopropylmalate and 3-isopropylmalate, via the formation of 2-isopropylmaleate. The chain is 3-isopropylmalate dehydratase large subunit from Shewanella putrefaciens (strain CN-32 / ATCC BAA-453).